The following is a 335-amino-acid chain: Glycerol-3-phosphate dehydrogenase [NAD(P)+] (335 aa).

Lysine 109 is a binding site for NADPH. 3 residues coordinate sn-glycerol 3-phosphate: lysine 109, glycine 141, and serine 143. An NADPH-binding site is contributed by alanine 145. Positions 196, 249, 259, 260, and 261 each coordinate sn-glycerol 3-phosphate. The Proton acceptor role is filled by lysine 196. An NADPH-binding site is contributed by arginine 260. Glutamate 283 lines the NADPH pocket.

This sequence belongs to the NAD-dependent glycerol-3-phosphate dehydrogenase family.

The protein localises to the cytoplasm. It carries out the reaction sn-glycerol 3-phosphate + NAD(+) = dihydroxyacetone phosphate + NADH + H(+). The enzyme catalyses sn-glycerol 3-phosphate + NADP(+) = dihydroxyacetone phosphate + NADPH + H(+). It functions in the pathway membrane lipid metabolism; glycerophospholipid metabolism. In terms of biological role, catalyzes the reduction of the glycolytic intermediate dihydroxyacetone phosphate (DHAP) to sn-glycerol 3-phosphate (G3P), the key precursor for phospholipid synthesis. This chain is Glycerol-3-phosphate dehydrogenase [NAD(P)+], found in Mycoplasma mobile (strain ATCC 43663 / 163K / NCTC 11711) (Mesomycoplasma mobile).